The chain runs to 500 residues: Cytochrome P450 11B1, mitochondrial (500 aa).

Residues 1 to 24 (MAFRLKSDVRLAGSWLCLRGARAL) constitute a mitochondrion transit peptide. Residue Cys447 coordinates heme.

This sequence belongs to the cytochrome P450 family. It depends on heme as a cofactor.

It localises to the mitochondrion inner membrane. It carries out the reaction a steroid + 2 reduced [adrenodoxin] + O2 + 2 H(+) = an 11beta-hydroxysteroid + 2 oxidized [adrenodoxin] + H2O. It catalyses the reaction 11-deoxycortisol + 2 reduced [adrenodoxin] + O2 + 2 H(+) = cortisol + 2 oxidized [adrenodoxin] + H2O. The enzyme catalyses 21-hydroxyprogesterone + 2 reduced [adrenodoxin] + O2 + 2 H(+) = corticosterone + 2 oxidized [adrenodoxin] + H2O. The catalysed reaction is 21-hydroxyprogesterone + 2 reduced [adrenodoxin] + O2 + 2 H(+) = 18-hydroxy-11-deoxycorticosterone + 2 oxidized [adrenodoxin] + H2O. It carries out the reaction 21-hydroxyprogesterone + 2 reduced [adrenodoxin] + O2 + 2 H(+) = 19-hydroxy-11-deoxycorticosterone + 2 oxidized [adrenodoxin] + H2O. It catalyses the reaction cortisol + 2 reduced [adrenodoxin] + O2 + 2 H(+) = 18-hydroxycortisol + 2 oxidized [adrenodoxin] + H2O. The enzyme catalyses 11-deoxycortisol + 2 reduced [adrenodoxin] + O2 + 2 H(+) = 18-hydroxy-11-deoxycortisol + 2 oxidized [adrenodoxin] + H2O. Its pathway is steroid biosynthesis; glucocorticoid biosynthesis. It functions in the pathway steroid hormone biosynthesis. Functionally, a cytochrome P450 monooxygenase involved in the biosynthesis of adrenal corticoids. Catalyzes a variety of reactions that are essential for many species, including detoxification, defense, and the formation of endogenous chemicals like steroid hormones. Steroid 11beta, 18- and 19-hydroxylase with preferred regioselectivity at 11beta, then 18, and lastly 19. Catalyzes the hydroxylation of 11-deoxycortisol and 11-deoxycorticosterone (21-hydroxyprogesterone) at 11beta position, yielding cortisol or corticosterone, respectively, but cannot produce aldosterone. Mechanistically, uses molecular oxygen inserting one oxygen atom into a substrate for hydroxylation and reducing the second into a water molecule. Two electrons are provided by NADPH via a two-protein mitochondrial transfer system comprising flavoprotein FDXR (adrenodoxin/ferredoxin reductase) and nonheme iron-sulfur protein FDX1 or FDX2 (adrenodoxin/ferredoxin). Due to its lack of 18-oxidation activity, it is incapable of generating aldosterone. Could also be involved in the androgen metabolic pathway. In Cavia porcellus (Guinea pig), this protein is Cytochrome P450 11B1, mitochondrial (CYP11B1).